We begin with the raw amino-acid sequence, 454 residues long: MTLPLHVVILAAGEGKRMRSALPKVLQPLAGQPMLAHVIATARELQPAAIHVVHGHGGAQVQAAFAGQPDLQWAEQRQQLGTGHAVQQALHAVPDAATVLVLYGDVPLIRSESLRELLHAPGRIAVLVADLANPSGYGRIVRNPEGKVAAIVEQKDADDEQRRIRTINTGILTAESTALRRWLGGLSNDNAQGEFYLTDVFASAAADYTPADMVQVSDPQDVEGANDPWQLAQLERAWQLRAARALCLQGVRMADPARVEQRGRVQVGHDVQLDIDVILEGEVTLGDGVVIGPFVRLRDVQLAAGTQVRAHCDLEGVVTEGAVQIGPFARLRPGTVLADGVHIGNFVETKKVVMGAGSKANHLTYLGDAVVGSKVNIGAGTITCNYDGVNKSQTTIGDGAFVGSNSALVAPIEIGTGATIGAGSVITRDAPPHQLSVARPRQTVIEGWERPKKK.

Residues 1–228 (MTLPLHVVIL…PQDVEGANDP (228 aa)) form a pyrophosphorylase region. UDP-N-acetyl-alpha-D-glucosamine is bound by residues 10-13 (LAAG), Lys24, Gln76, 81-82 (GT), 103-105 (YGD), Gly138, Glu153, Asn168, and Asn226. Residue Asp105 participates in Mg(2+) binding. Mg(2+) is bound at residue Asn226. Residues 229–249 (WQLAQLERAWQLRAARALCLQ) are linker. Positions 250-454 (GVRMADPARV…IEGWERPKKK (205 aa)) are N-acetyltransferase. Positions 332 and 350 each coordinate UDP-N-acetyl-alpha-D-glucosamine. Catalysis depends on His362, which acts as the Proton acceptor. Tyr365 and Asn376 together coordinate UDP-N-acetyl-alpha-D-glucosamine. Acetyl-CoA-binding positions include Ala379, 385–386 (NY), Ser404, Ala422, and Arg439.

This sequence in the N-terminal section; belongs to the N-acetylglucosamine-1-phosphate uridyltransferase family. In the C-terminal section; belongs to the transferase hexapeptide repeat family. In terms of assembly, homotrimer. Mg(2+) serves as cofactor.

The protein localises to the cytoplasm. The enzyme catalyses alpha-D-glucosamine 1-phosphate + acetyl-CoA = N-acetyl-alpha-D-glucosamine 1-phosphate + CoA + H(+). The catalysed reaction is N-acetyl-alpha-D-glucosamine 1-phosphate + UTP + H(+) = UDP-N-acetyl-alpha-D-glucosamine + diphosphate. The protein operates within nucleotide-sugar biosynthesis; UDP-N-acetyl-alpha-D-glucosamine biosynthesis; N-acetyl-alpha-D-glucosamine 1-phosphate from alpha-D-glucosamine 6-phosphate (route II): step 2/2. Its pathway is nucleotide-sugar biosynthesis; UDP-N-acetyl-alpha-D-glucosamine biosynthesis; UDP-N-acetyl-alpha-D-glucosamine from N-acetyl-alpha-D-glucosamine 1-phosphate: step 1/1. It functions in the pathway bacterial outer membrane biogenesis; LPS lipid A biosynthesis. Its function is as follows. Catalyzes the last two sequential reactions in the de novo biosynthetic pathway for UDP-N-acetylglucosamine (UDP-GlcNAc). The C-terminal domain catalyzes the transfer of acetyl group from acetyl coenzyme A to glucosamine-1-phosphate (GlcN-1-P) to produce N-acetylglucosamine-1-phosphate (GlcNAc-1-P), which is converted into UDP-GlcNAc by the transfer of uridine 5-monophosphate (from uridine 5-triphosphate), a reaction catalyzed by the N-terminal domain. This chain is Bifunctional protein GlmU, found in Xanthomonas campestris pv. campestris (strain 8004).